We begin with the raw amino-acid sequence, 211 residues long: MVAKAKTTKAKVELPPFEYPQGYQLIAGVDEVGRGPLVGDVVTAAVILDPNNPIEGLNDSKKLSEKKRLALLPEIKEKALAWAVGRCSPEEIDELNILQATMVAMQRAITGLKVQPDLALIDGNRCPELPMDSQAVVKGDLRVAEISAASIIAKVVRDQEMEELDKQYPQFGFAKHKGYPTKAHFEAIEQHGVISEHRKSFKPVKKALGLD.

In terms of domain architecture, RNase H type-2 spans 24-211 (QLIAGVDEVG…KPVKKALGLD (188 aa)). Residues Asp-30, Glu-31, and Asp-122 each coordinate a divalent metal cation.

This sequence belongs to the RNase HII family. It depends on Mn(2+) as a cofactor. The cofactor is Mg(2+).

The protein resides in the cytoplasm. The catalysed reaction is Endonucleolytic cleavage to 5'-phosphomonoester.. In terms of biological role, endonuclease that specifically degrades the RNA of RNA-DNA hybrids. The chain is Ribonuclease HII from Vibrio parahaemolyticus serotype O3:K6 (strain RIMD 2210633).